We begin with the raw amino-acid sequence, 551 residues long: Palmdelphin (551 aa).

The residue at position 1 (Met-1) is an N-acetylmethionine. A coiled-coil region spans residues 12–106 (QAITDKRKIQ…LQISTKEEAI (95 aa)). A Glycyl lysine isopeptide (Lys-Gly) (interchain with G-Cter in SUMO2) cross-link involves residue Lys-125. Ser-135 carries the phosphoserine modification. Residue Lys-179 forms a Glycyl lysine isopeptide (Lys-Gly) (interchain with G-Cter in SUMO1); alternate linkage. A Glycyl lysine isopeptide (Lys-Gly) (interchain with G-Cter in SUMO2); alternate cross-link involves residue Lys-179. A compositionally biased stretch (basic and acidic residues) spans 248–259 (ERNSKSPTEYHE). The segment at 248-280 (ERNSKSPTEYHEPVYANPFYRPTTPQRETVTPG) is disordered. Residues 270–280 (TTPQRETVTPG) show a composition bias toward polar residues. Thr-271 is modified (phosphothreonine). 4 positions are modified to phosphoserine: Ser-321, Ser-370, Ser-384, and Ser-385. 2 disordered regions span residues 342–392 (TPQK…QEDE) and 449–535 (DEEE…EDPS). The span at 484-495 (KRSEASPHENTN) shows a compositional bias: basic and acidic residues. Ser-498, Ser-515, and Ser-520 each carry phosphoserine.

The protein belongs to the paralemmin family. As to quaternary structure, interacts with GLUL. In terms of processing, phosphorylated. Ubiquitous. Most abundant in cardiac and skeletal muscle.

The protein localises to the cytoplasm. Its subcellular location is the cell projection. The protein resides in the dendrite. It localises to the dendritic spine. The sequence is that of Palmdelphin (PALMD) from Homo sapiens (Human).